The sequence spans 1016 residues: Primary septum glucan endo-1,3-beta-D-glucosidase (1016 aa).

Positions 1 to 20 are cleaved as a signal peptide; it reads MSSYLRSFIFGLLTISLAQC. An N-linked (GlcNAc...) asparagine glycan is attached at Asn37. The tract at residues 45 to 272 is beta-sandwich subdomain; that stretch reads TNVFDSVVDT…NGYIQIAKIP (228 aa). Residues 45-741 form the GH81 domain; that stretch reads TNVFDSVVDT…AYAAGLWAND (697 aa). The alpha/beta subdomain stretch occupies residues 273–364; it reads LGDGTAEALY…AGNSITFAEA (92 aa). The (alpha/beta)6 barrel subdomain stretch occupies residues 379 to 741; that stretch reads GQIGYSEEAL…AYAAGLWAND (363 aa). Asp492 is a catalytic residue. Residues His496, Asp567, Glu569, Glu573, and Tyr650 each coordinate (1,3-beta-D-glucosyl)n. Catalysis depends on residues Glu569 and Glu573. Positions 748 to 1016 are required for catalytic activity against insoluble beta-glucan and to restrict localization of the enzyme to the cell septum; that stretch reads SSSSTTTTST…GCSNGALVAA (269 aa). The interval 844–872 is disordered; it reads SSTTSSITPTPTTTSSITPTPTTTSTTTT.

Belongs to the glycosyl hydrolase 81 family.

The protein resides in the cell septum. It catalyses the reaction Hydrolysis of (1-&gt;3)-beta-D-glucosidic linkages in (1-&gt;3)-beta-D-glucans.. Cleaves internal linkages in 1,3-beta-glucan. Has a role in cell separation where it is required for the degradation of the primary septum after completion of cytokinesis. The sequence is that of Primary septum glucan endo-1,3-beta-D-glucosidase from Schizosaccharomyces pombe (strain 972 / ATCC 24843) (Fission yeast).